Here is a 495-residue protein sequence, read N- to C-terminus: MKAIMVVGTTSHAGKSFITTAICRILARQGWHVTPFKGQNMALNAYVTPTGGEIGHAQAVQAWAAKITPSVDMNPILLKPQGNMTSQVIIHGQAVGTTSAQEYYEQYFDRGWKAITSSLDCLASEYDVVVCEGAGSPAEINLKHRDLTNMRVAHHLNAATILVVDIDRGGAFAHVVGTLQLLEPEEKALIKGIVINKFRGQRSLLDSGIEWLENYTSIPVLGVIPWREIMFPSEDSLGLLDRPSYRSTTSLKISILRLPHISNFTDFDPLDAETTVNLNYLDLRGTLGYPDAVIIPGSKTTIADLIALHTTGMAQQLQDYVSAGGVILGICGGFQMLGQTVFDPDQLEGGQKAYKGLNLLPLETIITSNKIVRQRQIMSNYPYSGLPVTGYEIHQGITQLIQSYETEQTILLDQLFDDISLGFVNESQTIWGCYLHGLFDNGAWRRSWLNYLRQRRGLPSLPTGIANYREQREANLDAIADLVEEFVNLKPVFPK.

The 195-residue stretch at 250–444 (SLKISILRLP…LHGLFDNGAW (195 aa)) folds into the GATase cobBQ-type domain. Cys-331 (nucleophile) is an active-site residue. The active site involves His-436.

This sequence belongs to the CobB/CobQ family. CobQ subfamily.

It functions in the pathway cofactor biosynthesis; adenosylcobalamin biosynthesis. Catalyzes amidations at positions B, D, E, and G on adenosylcobyrinic A,C-diamide. NH(2) groups are provided by glutamine, and one molecule of ATP is hydrogenolyzed for each amidation. This chain is Cobyric acid synthase, found in Rippkaea orientalis (strain PCC 8801 / RF-1) (Cyanothece sp. (strain PCC 8801)).